The following is a 344-amino-acid chain: F17d-G fimbrial adhesin (344 aa).

The N-terminal stretch at 1-22 is a signal peptide; the sequence is MTNFYKVFLAVFILVCCNISQA. The segment at 23-199 is receptor-binding lectin domain; it reads AVSFIGSTEN…SLNPFTLNDT (177 aa). Residues 65 to 66, 110 to 111, and 139 to 142 contribute to the a carbohydrate site; these read AN, DT, and STQG. A disulfide bond links Cys75 and Cys132. The interval 200-344 is fimbrillin-binding domain; that stretch reads VTSCRLLTPS…GISTFTFSYQ (145 aa). The segment at 288–308 is disordered; sequence LKFGPDSPVKGNENQWQLSTG. The segment covering 299–308 has biased composition (polar residues); the sequence is NENQWQLSTG.

The protein belongs to the fimbrial protein family.

Its subcellular location is the fimbrium. In terms of biological role, essential fimbrial adhesion factor that mediates binding to N-acetylglucosamine-containing receptors in the host intestinal microvilli, leading to colonization of the intestinal tissue, and diarrhea or septicemia. Also confers adhesiveness to laminin and basement membranes. This chain is F17d-G fimbrial adhesin (f17dG), found in Escherichia coli.